Consider the following 179-residue polypeptide: Large ribosomal subunit protein uL5 (179 aa).

This sequence belongs to the universal ribosomal protein uL5 family. As to quaternary structure, part of the 50S ribosomal subunit; part of the 5S rRNA/L5/L18/L25 subcomplex. Contacts the 5S rRNA and the P site tRNA. Forms a bridge to the 30S subunit in the 70S ribosome.

Its function is as follows. This is one of the proteins that bind and probably mediate the attachment of the 5S RNA into the large ribosomal subunit, where it forms part of the central protuberance. In the 70S ribosome it contacts protein S13 of the 30S subunit (bridge B1b), connecting the 2 subunits; this bridge is implicated in subunit movement. Contacts the P site tRNA; the 5S rRNA and some of its associated proteins might help stabilize positioning of ribosome-bound tRNAs. In Dichelobacter nodosus (strain VCS1703A), this protein is Large ribosomal subunit protein uL5.